The sequence spans 34 residues: Photosystem I reaction center subunit XII (34 aa).

A helical membrane pass occupies residues 11 to 31 (VAIAFVVALIAGIAALLLSTA).

It belongs to the PsaM family. The G.violaceus PSI reaction center is composed of one copy each of PsaA,B,C,D,E,F,L,M and Z, and forms trimeric complexes.

The protein localises to the cell inner membrane. The protein is Photosystem I reaction center subunit XII of Gloeobacter violaceus (strain ATCC 29082 / PCC 7421).